We begin with the raw amino-acid sequence, 147 residues long: Prefoldin subunit alpha 2 (147 aa).

The protein belongs to the prefoldin subunit alpha family. In terms of assembly, heterohexamer of two alpha and four beta subunits.

It localises to the cytoplasm. Functionally, molecular chaperone capable of stabilizing a range of proteins. Seems to fulfill an ATP-independent, HSP70-like function in archaeal de novo protein folding. This chain is Prefoldin subunit alpha 2 (pfdA2), found in Methanocaldococcus jannaschii (strain ATCC 43067 / DSM 2661 / JAL-1 / JCM 10045 / NBRC 100440) (Methanococcus jannaschii).